Consider the following 791-residue polypeptide: Protein SEY1 (791 aa).

The Cytoplasmic segment spans residues 1–685 (MSEDGASKCQ…KRSTIKSHTH (685 aa)). The GB1/RHD3-type G domain occupies 40–268 (GLDYHVISVF…REDYYLSGKY (229 aa)). 50-57 (GSQSSGKS) contributes to the GTP binding site. A helical transmembrane segment spans residues 686 to 706 (IPMWIYAIIAVLGWNEFMLVL). Topologically, residues 707 to 709 (RNP) are lumenal. The helical transmembrane segment at 710–730 (LFIALMLLIVGAAYTVHRLNL) threads the bilayer. Residues 731–791 (WTPLATFASA…NETKENANES (61 aa)) lie on the Cytoplasmic side of the membrane. The disordered stretch occupies residues 763-791 (PKNASSKPVESFEMQDLSVNETKENANES).

This sequence belongs to the TRAFAC class dynamin-like GTPase superfamily. GB1/RHD3 GTPase family. RHD3 subfamily.

It is found in the endoplasmic reticulum membrane. Its function is as follows. Cooperates with the reticulon proteins and tubule-shaping DP1 family proteins to generate and maintain the structure of the tubular endoplasmic reticulum network. Has GTPase activity, which is required for its function in ER organization. This is Protein SEY1 from Eremothecium gossypii (strain ATCC 10895 / CBS 109.51 / FGSC 9923 / NRRL Y-1056) (Yeast).